The following is a 349-amino-acid chain: Pseudouridylate synthase TRUB1 (349 aa).

A2 carries the post-translational modification N-acetylalanine. The residue at position 11 (S11) is a Phosphoserine. D121 (nucleophile) is an active-site residue.

It belongs to the pseudouridine synthase TruB family. Highly expressed in heart, skeletal muscle and liver. Expressed at lower levels in lung, small intestine, kidney and spleen.

The protein localises to the nucleus. Its subcellular location is the cytoplasm. The protein resides in the cytosol. The catalysed reaction is a uridine in mRNA = a pseudouridine in mRNA. It carries out the reaction a uridine in tRNA = a pseudouridine in tRNA. The enzyme catalyses uridine(55) in tRNA = pseudouridine(55) in tRNA. Its function is as follows. Pseudouridine synthase that catalyzes pseudouridylation of mRNAs and tRNAs. Mediates pseudouridylation of mRNAs with the consensus sequence 5'-GUUCNANNC-3', harboring a stem-loop structure. Constitutes the major pseudouridine synthase acting on mRNAs. Also catalyzes pseudouridylation of some tRNAs, including synthesis of pseudouridine(55) from uracil-55, in the psi GC loop of a subset of tRNAs. Promotes the processing of pri-let-7 microRNAs (pri-miRNAs) independently of its RNA pseudouridylate synthase activity. Acts by binding to the stem-loop structure on pri-let-7, preventing LIN28-binding (LIN28A and/or LIN28B), thereby enhancing the interaction between pri-let-7 and the microprocessor DGCR8, which mediates miRNA maturation. This chain is Pseudouridylate synthase TRUB1, found in Homo sapiens (Human).